A 197-amino-acid chain; its full sequence is Nucleoid occlusion factor SlmA (197 aa).

One can recognise an HTH tetR-type domain in the interval 7–67 (INRREHILQC…GLIEFIEDAI (61 aa)). The segment at residues 30–49 (TTAKLAAEVGVSEAALYRHF) is a DNA-binding region (H-T-H motif).

It belongs to the nucleoid occlusion factor SlmA family. As to quaternary structure, homodimer. Interacts with FtsZ.

It localises to the cytoplasm. The protein resides in the nucleoid. Required for nucleoid occlusion (NO) phenomenon, which prevents Z-ring formation and cell division over the nucleoid. Acts as a DNA-associated cell division inhibitor that binds simultaneously chromosomal DNA and FtsZ, and disrupts the assembly of FtsZ polymers. SlmA-DNA-binding sequences (SBS) are dispersed on non-Ter regions of the chromosome, preventing FtsZ polymerization at these regions. In Shewanella denitrificans (strain OS217 / ATCC BAA-1090 / DSM 15013), this protein is Nucleoid occlusion factor SlmA.